We begin with the raw amino-acid sequence, 203 residues long: EF-hand calcium-binding domain-containing protein 8 (203 aa).

Residues 61-107 (SSEKPGESPKPQKMAQPGGSQKKETSRSVPVTDPTSHNSEINQRDQQ) form a disordered region. The segment covering 87 to 107 (RSVPVTDPTSHNSEINQRDQQ) has biased composition (polar residues). EF-hand domains are found at residues 111-145 (MHLA…VLSS) and 146-181 (MSEE…EFQG).

This chain is EF-hand calcium-binding domain-containing protein 8 (Efcab8), found in Mus musculus (Mouse).